A 257-amino-acid polypeptide reads, in one-letter code: Imidazole glycerol phosphate synthase subunit HisF (257 aa).

Catalysis depends on residues aspartate 11 and aspartate 130.

It belongs to the HisA/HisF family. Heterodimer of HisH and HisF.

The protein localises to the cytoplasm. The catalysed reaction is 5-[(5-phospho-1-deoxy-D-ribulos-1-ylimino)methylamino]-1-(5-phospho-beta-D-ribosyl)imidazole-4-carboxamide + L-glutamine = D-erythro-1-(imidazol-4-yl)glycerol 3-phosphate + 5-amino-1-(5-phospho-beta-D-ribosyl)imidazole-4-carboxamide + L-glutamate + H(+). The protein operates within amino-acid biosynthesis; L-histidine biosynthesis; L-histidine from 5-phospho-alpha-D-ribose 1-diphosphate: step 5/9. IGPS catalyzes the conversion of PRFAR and glutamine to IGP, AICAR and glutamate. The HisF subunit catalyzes the cyclization activity that produces IGP and AICAR from PRFAR using the ammonia provided by the HisH subunit. The polypeptide is Imidazole glycerol phosphate synthase subunit HisF (Prochlorococcus marinus (strain SARG / CCMP1375 / SS120)).